The chain runs to 157 residues: Small ribosomal subunit protein uS7 (157 aa).

This sequence belongs to the universal ribosomal protein uS7 family. In terms of assembly, part of the 30S ribosomal subunit. Contacts proteins S9 and S11.

Functionally, one of the primary rRNA binding proteins, it binds directly to 16S rRNA where it nucleates assembly of the head domain of the 30S subunit. Is located at the subunit interface close to the decoding center, probably blocks exit of the E-site tRNA. This chain is Small ribosomal subunit protein uS7, found in Polaromonas sp. (strain JS666 / ATCC BAA-500).